We begin with the raw amino-acid sequence, 258 residues long: Ubiquinone/menaquinone biosynthesis C-methyltransferase UbiE (258 aa).

S-adenosyl-L-methionine-binding positions include T81, D102, and 130–131 (NA).

This sequence belongs to the class I-like SAM-binding methyltransferase superfamily. MenG/UbiE family.

The enzyme catalyses a 2-demethylmenaquinol + S-adenosyl-L-methionine = a menaquinol + S-adenosyl-L-homocysteine + H(+). The catalysed reaction is a 2-methoxy-6-(all-trans-polyprenyl)benzene-1,4-diol + S-adenosyl-L-methionine = a 5-methoxy-2-methyl-3-(all-trans-polyprenyl)benzene-1,4-diol + S-adenosyl-L-homocysteine + H(+). It participates in quinol/quinone metabolism; menaquinone biosynthesis; menaquinol from 1,4-dihydroxy-2-naphthoate: step 2/2. The protein operates within cofactor biosynthesis; ubiquinone biosynthesis. Methyltransferase required for the conversion of demethylmenaquinol (DMKH2) to menaquinol (MKH2) and the conversion of 2-polyprenyl-6-methoxy-1,4-benzoquinol (DDMQH2) to 2-polyprenyl-3-methyl-6-methoxy-1,4-benzoquinol (DMQH2). This is Ubiquinone/menaquinone biosynthesis C-methyltransferase UbiE from Sinorhizobium fredii (strain NBRC 101917 / NGR234).